Consider the following 2049-residue polypeptide: Nonribosomal peptide synthetase tcpP (2049 aa).

An adenylation 1 region spans residues 13–395 (RHHAEAHPEA…LGRKDQLIKN (383 aa)). A Carrier 1 domain is found at 497 to 573 (ATADTKLSAL…EISNHIIEFD (77 aa)). An O-(pantetheine 4'-phosphoryl)serine modification is found at Ser534. The segment at 605–913 (REITMTDVQR…ALGSKMDLLS (309 aa)) is condensation 1. Positions 1071-1452 (VAAWPMSVAL…GRADHQVKVR (382 aa)) are adenylation 2. In terms of domain architecture, Carrier 2 spans 1550-1625 (DHTELVVSQV…SLAASVKKHL (76 aa)). Ser1585 carries the O-(pantetheine 4'-phosphoryl)serine modification. Residues 1662–2044 (MHKQASNPSS…FEQEICNLLD (383 aa)) are condensation 2.

It belongs to the NRP synthetase family.

The protein operates within secondary metabolite biosynthesis. In terms of biological role, nonribosomal peptide synthetase; part of the gene cluster that mediates the biosynthesis of an unusual class of epipolythiodioxopiperazines (ETPs) lacking the reactive thiol group important for toxicity. Firstly, L-tyrosine is prenylated by tcpD, before undergoing condensation with L-glycine in a reaction catalyzed by the NRPS tcpP leading to the diketopiperazine (DKP) backbone. Afterwards the alpha-carbon of tyrosine is oxidized by the cytochrome P450 tcpC to form a hydroxyl group. However, in contrast other ETP biosynthesis pathways studied so far, tcpC is not able to bishydroxylate the DKP at both alpha-carbon positions, but hydroxylates the alpha-carbon of the tyrosine part and the nitrogen of the glycine part. The next steps involve an alpha,beta-elimination reaction catalyzed by tcpI, a methylation by the methyltransferase tcpN the action of the four enzyme cascade tcpG/K/J/I. Due to a dysfunctional cytochrome P450 monooxygenase tcpC, the pathway leads to the biosynthesis of probable non-toxic metabolites lacking the reactive thiol group. The protein is Nonribosomal peptide synthetase tcpP of Claviceps purpurea (strain 20.1) (Ergot fungus).